The following is a 312-amino-acid chain: sn-1-specific diacylglycerol lipase ABHD11 (312 aa).

The N-terminal 14 residues, 1–14, are a transit peptide targeting the mitochondrion; sequence MITFKSFHCSRGWH. Residues 62 to 297 form the AB hydrolase-1 domain; it reads PPLVLLHGLF…GAGHWVHADK (236 aa). Catalysis depends on charge relay system residues Ser-136, Glu-232, and His-291.

It belongs to the AB hydrolase superfamily. Post-translationally, phosphorylated.

The protein resides in the mitochondrion. Its subcellular location is the mitochondrion matrix. It catalyses the reaction 1-octadecanoyl-2-(5Z,8Z,11Z,14Z-eicosatetraenoyl)-sn-glycerol + H2O = 2-(5Z,8Z,11Z,14Z-eicosatetraenoyl)-glycerol + octadecanoate + H(+). The enzyme catalyses a 1,2-diacyl-sn-glycerol + H2O = a 2-acylglycerol + a fatty acid + H(+). It carries out the reaction a 1,3-diacyl-sn-glycerol + H2O = a 1-acyl-sn-glycerol + a fatty acid + H(+). The catalysed reaction is 1-octadecanoyl-2-(9Z-octadecenoyl)-sn-glycerol + H2O = 2-(9Z-octadecenoyl)-glycerol + octadecanoate + H(+). It catalyses the reaction 1-octadecanoyl-2-(4Z,7Z,10Z,13Z,16Z,19Z-docosahexaenoyl)-sn-glycerol + H2O = 2-(4Z,7Z,10Z,13Z,16Z,19Z-docosahexaenoyl)-glycerol + octadecanoate + H(+). The enzyme catalyses 1,2-didecanoylglycerol + H2O = decanoylglycerol + decanoate + H(+). Catalyzes the hydrolysis of diacylglycerol in vitro and may function as a key regulator in lipid metabolism, namely by regulating the intracellular levels of diacylglycerol. 1,2-diacyl-sn-glycerols are the preferred substrate over 1,3-diacyl-sn-glycerols. The enzyme hydrolyzes stearate in preference to palmitate from the sn-1 position of 1,2-diacyl-sn-glycerols. The sequence is that of sn-1-specific diacylglycerol lipase ABHD11 from Xenopus laevis (African clawed frog).